The sequence spans 82 residues: Progonadoliberin-3 (82 aa).

The signal sequence occupies residues 1-23; it reads MDLSSKTVVQVVMLALIAQVTFS. Gln-24 bears the Pyrrolidone carboxylic acid mark. At Gly-33 the chain carries Glycine amide.

It belongs to the GnRH family.

Its subcellular location is the secreted. Functionally, stimulates the secretion of gonadotropins. The protein is Progonadoliberin-3 (gnrh3) of Oncorhynchus masou (Cherry salmon).